The primary structure comprises 270 residues: UPF0354 protein BcerKBAB4_4524 (270 aa).

This sequence belongs to the UPF0354 family.

This is UPF0354 protein BcerKBAB4_4524 from Bacillus mycoides (strain KBAB4) (Bacillus weihenstephanensis).